We begin with the raw amino-acid sequence, 577 residues long: Arginine--tRNA ligase (577 aa).

The 'HIGH' region motif lies at proline 122–histidine 132.

This sequence belongs to the class-I aminoacyl-tRNA synthetase family. In terms of assembly, monomer.

It is found in the cytoplasm. It carries out the reaction tRNA(Arg) + L-arginine + ATP = L-arginyl-tRNA(Arg) + AMP + diphosphate. This Aliivibrio fischeri (strain MJ11) (Vibrio fischeri) protein is Arginine--tRNA ligase.